The sequence spans 317 residues: 3'-5' exoribonuclease YhaM (317 aa).

The segment at residues 17–90 (FLLIKESTRG…QLKILSIRLS (74 aa)) is a DNA-binding region (OB). An HD domain is found at 163 to 279 (HVVSMLAIGK…LHLIDLIDAK (117 aa)).

This sequence belongs to the YhaM family.

Shows a 3'-5' exoribonuclease activity. The sequence is that of 3'-5' exoribonuclease YhaM from Oceanobacillus iheyensis (strain DSM 14371 / CIP 107618 / JCM 11309 / KCTC 3954 / HTE831).